Reading from the N-terminus, the 445-residue chain is UPF0210 protein STER_0157 (445 aa).

The protein belongs to the UPF0210 family. Homodimer.

The polypeptide is UPF0210 protein STER_0157 (Streptococcus thermophilus (strain ATCC BAA-491 / LMD-9)).